Consider the following 38-residue polypeptide: MKVRASVKKLCRNCKIIRRDGVVRVICSTEPRHKQRQG.

It belongs to the bacterial ribosomal protein bL36 family.

In Azotobacter vinelandii (strain DJ / ATCC BAA-1303), this protein is Large ribosomal subunit protein bL36.